A 238-amino-acid polypeptide reads, in one-letter code: Pre-protein VI (238 aa).

A propeptide spanning residues 1–33 (MDAVNFSILAPRYGSHPMMSAWSGIGTSDMNGG) is cleaved from the precursor. Residues 34–54 (AFNWGGIWSGIKNFGSNVKNW) are amphipathic alpha-helix essential for membrane lytic activity. The interval 36 to 53 (NWGGIWSGIKNFGSNVKN) is involved in endosomal membrane lysis. Positions 48 to 74 (GSNVKNWGSRAWNSQTGKLLRQKLNDT) are interaction with hexon protein. The Nuclear export signal signature appears at 67–76 (LRQKLNDTKV). Positions 153–156 (PPSY) match the PPXY motif motif. Residues 187–212 (TLELKPSDQPPPYSPQSSNMPVTAPV) are disordered. Positions 219-230 (GTLANIVGVGLS) match the Nuclear export signal motif. Positions 221–227 (LANIVGV) are interaction with hexon protein. A binds to importin alpha/beta, involved in hexon nuclear import region spans residues 228-238 (GLSNVKRRRCF). Positions 233 to 236 (KRRR) match the Nuclear localization signal motif.

Belongs to the adenoviridae protein VI family. As to quaternary structure, interacts with hexon protein; this interaction allows nuclear import of hexon trimers and possibly pre-capsid assembly. Interacts (via C-terminal NLS) with importin alpha/beta. Interacts (via PPxY motif) with host NEDD4 ubiquitine ligase; this interaction might play a role in virus intracellular transport during entry. Part of a complex composed of the core-capsid bridging protein, the endosome lysis protein VI and the hexon-linking protein VIII; these interactions bridge the virus core to the capsid. Interacts with peripentonal hexons; this interaction stabilizes the capsid by gluing two peripentonal hexons together and joining them with an adjacent group-of-nine hexon. In terms of assembly, heterodimer with the viral protease; disulfide-linked. Interacts with the viral protease. In terms of processing, ubiquitinated by Nedd4 following partial capsid disassembly; which might play a role in intracellular virus movement during entry. Post-translationally, contains the major nuclear import and export signals. Proteolytically removed during virion maturation. The processing of the C-terminus turns the precursor into a mature viral structural protein and abrogates its ability to promote hexon import and act as a potential chaperone protein.

The protein localises to the host nucleus. It localises to the host cytoplasm. Its subcellular location is the virion. In terms of biological role, during virus assembly, promotes hexon trimers nuclear import through nuclear pore complexes via an importin alpha/beta-dependent mechanism. By analogy to herpesviruses capsid assembly, might act as a chaperone to promote the formation of the icosahedral capsid. Its function is as follows. Structural component of the virion that provides increased stability to the particle shell through its interaction with the core-capsid bridging protein and the hexon-linking protein VIII. Fibers shedding during virus entry into host cell allows the endosome lysis protein to be exposed as a membrane-lytic peptide. Exhibits pH-independent membrane fragmentation activity and probably mediates viral rapid escape from host endosome via organellar membrane lysis. It is not clear if it then remains partially associated with the capsid and involved in the intracellular microtubule-dependent transport of capsid to the nucleus, or if it is lost during endosomal penetration. Functionally, cofactor that activates the viral protease. Binds to viral protease in a 1:1 ratio. The sequence is that of Pre-protein VI from Canis lupus familiaris (Dog).